A 409-amino-acid polypeptide reads, in one-letter code: Pleckstrin homology domain-containing family O member 1 (409 aa).

Residues 1-24 are disordered; it reads MMKKNNSAKRGPQDGNQQPAPPEK. The 112-residue stretch at 21-132 folds into the PH domain; that stretch reads PPEKVGWVRK…WINALNSAIT (112 aa). An interaction with capping proteins (CPs) region spans residues 133–193; it reads RAKNRILDEV…MLTLDLIQEE (61 aa). The interaction with ATM, CKIP, IFP35 and NMI stretch occupies residues 136–308; the sequence is NRILDEVTVE…LPNPGQLSRI (173 aa). Residues 218-267 form a disordered region; that stretch reads LAGSRRRADSDRIQPSADRASSLSRPWEKTDKGATYTPQAPKKLTPTEKG. Phosphoserine is present on residues serine 227 and serine 271. The segment at 308 to 409 is negative regulator of AP-1 activity; that stretch reads IQDLVARKLE…PHSQYRKSLM (102 aa). Disordered stretches follow at residues 325–350 and 390–409; these read EVQGLGDGKRKAKDPPRSPPDSESEQ and TPDSHLRQTTPHSQYRKSLM. Residues 331 to 340 show a composition bias toward basic and acidic residues; the sequence is DGKRKAKDPP. Serine 342 carries the phosphoserine modification. A compositionally biased stretch (polar residues) spans 390 to 402; sequence TPDSHLRQTTPHS.

Heterodimer or homodimer. Interacts with CK2 and actin capping subunits (capping protein CP-alpha and CP-beta). CKIP1 and CK2 together inhibit the activity of actin capping protein at the barbed ends of actin filaments. Interacts with ATM, IFP35, JUN, JUND, NMI and PI3K. Interacts with AKT1, AKT2 and AKT3 (each isozyme of PKB), PtdIns(3,5)P2, PtdIns(4,5)P2 and PtdIns(3,4,5)P2. In terms of processing, C-terminal fragments could be released during apoptosis via caspase-3-dependent cleavage. Abundantly expressed in skeletal muscle and heart, moderately in kidney, liver, brain and placenta and sparingly in the pancreas and lung. Easily detectable in cell lines such as MOLT-4, HEK293 and Jurkat.

Its subcellular location is the cell membrane. It is found in the nucleus. It localises to the cytoplasm. In terms of biological role, plays a role in the regulation of the actin cytoskeleton through its interactions with actin capping protein (CP). May function to target CK2 to the plasma membrane thereby serving as an adapter to facilitate the phosphorylation of CP by protein kinase 2 (CK2). Appears to target ATM to the plasma membrane. Appears to also inhibit tumor cell growth by inhibiting AKT-mediated cell-survival. Also implicated in PI3K-regulated muscle differentiation, the regulation of AP-1 activity (plasma membrane bound AP-1 regulator that translocates to the nucleus) and the promotion of apoptosis induced by tumor necrosis factor TNF. When bound to PKB, it inhibits it probably by decreasing PKB level of phosphorylation. The chain is Pleckstrin homology domain-containing family O member 1 (PLEKHO1) from Homo sapiens (Human).